The chain runs to 103 residues: Histone H4 (103 aa).

The segment covering 1–14 (MTGRGKGGKGLGKG) has biased composition (gly residues). Residues 1–20 (MTGRGKGGKGLGKGGAKRHR) form a disordered region. An N-acetylthreonine modification is found at T2. K6 carries the post-translational modification N6-acetyl-N6-methyllysine; alternate. Residues K6, K9, K13, and K17 each carry the N6-acetyllysine modification. K13 carries the N6-acetyl-N6-methyllysine; alternate modification. Position 21 is an N6,N6-dimethyllysine (K21). K32 is modified (N6-methyllysine).

Belongs to the histone H4 family. As to quaternary structure, the nucleosome is a histone octamer containing two molecules each of H2A, H2B, H3 and H4 assembled in one H3-H4 heterotetramer and two H2A-H2B heterodimers. The octamer wraps approximately 147 bp of DNA.

The protein localises to the nucleus. It localises to the chromosome. In terms of biological role, core component of nucleosome. Nucleosomes wrap and compact DNA into chromatin, limiting DNA accessibility to the cellular machineries which require DNA as a template. Histones thereby play a central role in transcription regulation, DNA repair, DNA replication and chromosomal stability. DNA accessibility is regulated via a complex set of post-translational modifications of histones, also called histone code, and nucleosome remodeling. Functionally, a mixture of histones H2B and H4 has antimicrobial activity against the Gram-positive bacterium M.luteus. The chain is Histone H4 from Penaeus vannamei (Whiteleg shrimp).